Here is a 262-residue protein sequence, read N- to C-terminus: Putative hydro-lyase cu1581 (262 aa).

It belongs to the D-glutamate cyclase family.

This is Putative hydro-lyase cu1581 from Corynebacterium urealyticum (strain ATCC 43042 / DSM 7109).